Consider the following 569-residue polypeptide: MNITSLQQNITRSWQIPFTNSSDSIVTVGDRNLTIDEVVNVARHGTQVRLTDNADVIRGVQASCDYINNAVETAQPIYGVTSGFGGMADVVISREQAAELQTNLIWFLKSGAGNKLSLADVRAAMLLRANSHLYGASGIRLELIQRIETFLNAGVTPHVYEFGSIGASGDLVPLSYITGALIGLDPSFTVDFDGKEMDAVTALSRLGLPKLQLQPKEGLAMMNGTSVMTGIAANCVYDAKVLLALTMGVHALAIQGLYGTNQSFHPFIHQCKPHPGQLWTADQMFSLLKDSSLVREELDGKHEYRGKDLIQDRYSLRCLAQFIGPIVDGVSEITKQIEVEMNSVTDNPLIDVENQVSYHGGNFLGQYVGVTMDRLRYYIGLLAKHIDVQIALLVSPEFSNGLPPSLVGNSDRKVNMGLKGLQISGNSIMPLLSFYGNSLADRFPTHAEQFNQNINSQGYISANLTRRSVDIFQNYMAIALMFGVQAVDLRTYKMKGHYDARTCLSPNTVQLYTAVCEVVGKPLTSVRPYIWNDNEQCLDEHIARISADIAGGGLIVQAVEHIFSSLKST.

Tyrosine 78 (proton donor/acceptor) is an active-site residue. A cross-link (5-imidazolinone (Ala-Gly)) is located at residues 167–169 (ASG). Serine 168 carries the post-translational modification 2,3-didehydroalanine (Ser). Asparagine 223, glutamine 311, arginine 317, asparagine 347, lysine 419, glutamate 448, and asparagine 451 together coordinate (E)-cinnamate.

This sequence belongs to the PAL/histidase family. Homotetramer. In terms of processing, contains an active site 4-methylidene-imidazol-5-one (MIO), which is formed autocatalytically by cyclization and dehydration of residues Ala-Ser-Gly.

Its subcellular location is the cytoplasm. The catalysed reaction is L-phenylalanine = (E)-cinnamate + NH4(+). The protein operates within phenylpropanoid metabolism; trans-cinnamate biosynthesis; trans-cinnamate from L-phenylalanine: step 1/1. Functionally, catalyzes the non-oxidative deamination of L-phenylalanine to form trans-cinnamic acid, the first step in the phenylpropanoid pathway. The protein is Phenylalanine ammonia-lyase of Nostoc punctiforme (strain ATCC 29133 / PCC 73102).